A 382-amino-acid polypeptide reads, in one-letter code: Chaperone protein DnaJ (382 aa).

Positions 5 to 70 (DYYETLGVSR…NKRAAYDRYG (66 aa)) constitute a J domain. The segment at 140-218 (GKTAQIRVPT…CHGQGRITEE (79 aa)) adopts a CR-type zinc-finger fold. Residues Cys153, Cys156, Cys170, Cys173, Cys192, Cys195, Cys206, and Cys209 each contribute to the Zn(2+) site. CXXCXGXG motif repeat units follow at residues 153–160 (CDVCSGSG), 170–177 (CGTCQGSG), 192–199 (CPTCHGRG), and 206–213 (CGKCHGQG).

Belongs to the DnaJ family. As to quaternary structure, homodimer. Zn(2+) serves as cofactor.

Its subcellular location is the cytoplasm. In terms of biological role, participates actively in the response to hyperosmotic and heat shock by preventing the aggregation of stress-denatured proteins and by disaggregating proteins, also in an autonomous, DnaK-independent fashion. Unfolded proteins bind initially to DnaJ; upon interaction with the DnaJ-bound protein, DnaK hydrolyzes its bound ATP, resulting in the formation of a stable complex. GrpE releases ADP from DnaK; ATP binding to DnaK triggers the release of the substrate protein, thus completing the reaction cycle. Several rounds of ATP-dependent interactions between DnaJ, DnaK and GrpE are required for fully efficient folding. Also involved, together with DnaK and GrpE, in the DNA replication of plasmids through activation of initiation proteins. This chain is Chaperone protein DnaJ, found in Rhizobium rhizogenes (strain K84 / ATCC BAA-868) (Agrobacterium radiobacter).